Here is a 248-residue protein sequence, read N- to C-terminus: MGEQLKKQPVLRGGGFTFKQFFVAHDRCAMKVGTDGVLLGAWVPVLHARRVLDIGCGSGLIALMIAQRSLPQVQIDGVELEPAAAQQASSNVELSPWAERIHIHQQDIHQFAENHPHQYDLIVSNPPYFAPAIACRDEARDTARYTGSLTHDALLNCAEKLITEDGMFCVVLPHELGIEFARLAGQQGWFVRCQVDIRDRPGKPLHRMLLTLSRQAGETVYQHLALRQSEGVYSPEFCQLISDFYLNY.

Belongs to the methyltransferase superfamily. tRNA (adenine-N(6)-)-methyltransferase family.

It is found in the cytoplasm. The catalysed reaction is adenosine(37) in tRNA1(Val) + S-adenosyl-L-methionine = N(6)-methyladenosine(37) in tRNA1(Val) + S-adenosyl-L-homocysteine + H(+). In terms of biological role, specifically methylates the adenine in position 37 of tRNA(1)(Val) (anticodon cmo5UAC). In Yersinia pseudotuberculosis serotype O:1b (strain IP 31758), this protein is tRNA1(Val) (adenine(37)-N6)-methyltransferase.